The chain runs to 166 residues: RING-H2 finger protein ATL79 (166 aa).

An N-terminal signal peptide occupies residues 1 to 16; it reads MRLLVAEAASPLSSAA. Residues 41 to 61 traverse the membrane as a helical segment; the sequence is SVLLILVISALICALSLYAAI. The tract at residues 71 to 90 is disordered; that stretch reads TEDDHKPDPEAAASSTPTTP. Over residues 81–90 the composition is skewed to low complexity; the sequence is AAASSTPTTP. The RING-type; atypical zinc-finger motif lies at 107–149; that stretch reads CAICLSEFEQGESIQVLEKCQHGFHVKCIHKWLSTRSSCPTCR.

This sequence belongs to the RING-type zinc finger family. ATL subfamily.

Its subcellular location is the membrane. The enzyme catalyses S-ubiquitinyl-[E2 ubiquitin-conjugating enzyme]-L-cysteine + [acceptor protein]-L-lysine = [E2 ubiquitin-conjugating enzyme]-L-cysteine + N(6)-ubiquitinyl-[acceptor protein]-L-lysine.. It participates in protein modification; protein ubiquitination. This is RING-H2 finger protein ATL79 (ATL79) from Arabidopsis thaliana (Mouse-ear cress).